The sequence spans 201 residues: Regulator of G-protein signaling 16 (201 aa).

2 S-palmitoyl cysteine lipidation sites follow: cysteine 2 and cysteine 12. The RGS domain maps to 64 to 180; it reads SFDLLLNSKN…LKSPAYRDLA (117 aa). Tyrosine 167 carries the post-translational modification Phosphotyrosine; by EGFR. A Phosphotyrosine modification is found at tyrosine 176. The segment at 181–201 is disordered; that stretch reads AQASATSTSAPSGSPAEPSHT.

In terms of assembly, interacts with GNAI1 and GNAQ. Interacts with GNAI3, GNAI3 and GNAO1. In terms of processing, palmitoylated on Cys-2 and/or Cys-12. Phosphorylated. Phosphorylation at Tyr-167 by EGFR enhances GTPase accelerating (GAP) activity toward GNAI1. Retinal; also predominantly expressed in the liver and pituitary.

The protein localises to the membrane. Functionally, regulates G protein-coupled receptor signaling cascades. Inhibits signal transduction by increasing the GTPase activity of G protein alpha subunits, thereby driving them into their inactive GDP-bound form. Plays an important role in the phototransduction cascade by regulating the lifetime and effective concentration of activated transducin alpha. May regulate extra and intracellular mitogenic signals. This chain is Regulator of G-protein signaling 16 (Rgs16), found in Mus musculus (Mouse).